A 144-amino-acid chain; its full sequence is Large ribosomal subunit protein uL13 (144 aa).

The disordered stretch occupies residues 125-144 (YRGPEHPHQAQKPQPLEVKA).

Belongs to the universal ribosomal protein uL13 family. In terms of assembly, part of the 50S ribosomal subunit.

In terms of biological role, this protein is one of the early assembly proteins of the 50S ribosomal subunit, although it is not seen to bind rRNA by itself. It is important during the early stages of 50S assembly. This is Large ribosomal subunit protein uL13 from Aquifex aeolicus (strain VF5).